Here is a 449-residue protein sequence, read N- to C-terminus: C4-dicarboxylate transport protein (449 aa).

9 helical membrane-spanning segments follow: residues 5–25 (AVFKSLYFQVLVAIAIGVSLG), 45–65 (LIKMIIAPIIFCTIVVGIAGM), 77–97 (LAVLYFEVVSTIALVIGLIVV), 149–169 (GDMLQVLFFSILFGYAMHSFG), 185–205 (VLFGIVGVIMKVAPIGAFGAM), 231–251 (CVIFILGVLGSIAAFHGFSII), 298–318 (GYSFNLDGTSIYLTMAAVFIA), 332–352 (TLLVILLLTSKGAAGVTGSGF), and 353–373 (IVLAATLSAVGTVPVAGLALI).

The protein belongs to the dicarboxylate/amino acid:cation symporter (DAACS) (TC 2.A.23) family.

It localises to the cell inner membrane. Responsible for the transport of dicarboxylates such as succinate, fumarate, and malate from the periplasm across the membrane. This Dechloromonas aromatica (strain RCB) protein is C4-dicarboxylate transport protein.